A 604-amino-acid polypeptide reads, in one-letter code: Glutamine--fructose-6-phosphate aminotransferase [isomerizing] (604 aa).

The active-site Nucleophile; for GATase activity is the C2. The Glutamine amidotransferase type-2 domain maps to 2-216 (CGIVGYVGFR…DGDVVRLTRE (215 aa)). 2 SIS domains span residues 281-420 (LALD…GRGA) and 453-594 (VAEK…VDQP). Residue K599 is the For Fru-6P isomerization activity of the active site.

Homodimer.

The protein resides in the cytoplasm. It carries out the reaction D-fructose 6-phosphate + L-glutamine = D-glucosamine 6-phosphate + L-glutamate. In terms of biological role, catalyzes the first step in hexosamine metabolism, converting fructose-6P into glucosamine-6P using glutamine as a nitrogen source. The polypeptide is Glutamine--fructose-6-phosphate aminotransferase [isomerizing] (Thermus thermophilus (strain ATCC 27634 / DSM 579 / HB8)).